Reading from the N-terminus, the 713-residue chain is Probable tRNA (uracil-O(2)-)-methyltransferase (713 aa).

Disordered regions lie at residues 49-92 (TLRS…REGT) and 480-508 (LHSRQGHPQSRPGGAHAPSAPQTAAHDAG). Serine 76 is subject to Phosphoserine. Over residues 79–89 (GEPESGPRASR) the composition is skewed to basic and acidic residues. Position 489 is a phosphoserine (serine 489). The segment at 669-698 (FKTRICWFFAHHPDGCVLPAAQCPFAHGPE) adopts a C3H1-type zinc-finger fold.

The protein belongs to the TRM44 family.

It localises to the cytoplasm. It catalyses the reaction uridine(44) in tRNA(Ser) + S-adenosyl-L-methionine = 2'-O-methyluridine(44) in tRNA(Ser) + S-adenosyl-L-homocysteine + H(+). Probable adenosyl-L-methionine (AdoMet)-dependent tRNA (uracil-O(2)-)-methyltransferase. This Mus musculus (Mouse) protein is Probable tRNA (uracil-O(2)-)-methyltransferase (Trmt44).